The primary structure comprises 271 residues: Aquaporin-11 (271 aa).

At methionine 1–threonine 14 the chain is on the cytoplasmic side. A helical transmembrane segment spans residues cysteine 15–alanine 35. Topologically, residues arginine 36–arginine 41 are lumenal. A helical membrane pass occupies residues proline 42 to histidine 62. Over glutamate 63 to threonine 76 the chain is Cytoplasmic. Residues tryptophan 77–alanine 97 form a helical membrane-spanning segment. The Lumenal segment spans residues serine 98–alanine 166. The short motif at asparagine 99–cysteine 101 is the NPC element. Residues isoleucine 167 to valine 187 form a helical membrane-spanning segment. Residues arginine 188–histidine 194 lie on the Cytoplasmic side of the membrane. Residues leucine 195–phenylalanine 215 form a helical membrane-spanning segment. The NPA motif lies at asparagine 216–alanine 218. Topologically, residues asparagine 216–lysine 234 are lumenal. A helical transmembrane segment spans residues phenylalanine 235–serine 255. The Cytoplasmic portion of the chain corresponds to phenylalanine 256–glutamate 271.

The protein belongs to the MIP/aquaporin (TC 1.A.8) family. AQP11/AQP12 subfamily. In terms of assembly, homodimer; disulfide-linked. Homotetramer. Can also form homomultimer. In terms of processing, not glycosylated. Highly expressed in the S1 proximal tubule segment,. Expressed in the testis, kidney, and liver. Weakly expressed in the heart, brain, and muscle. Highly expressed in the testis. Expressed in the proximal tubule of the cortex of 8-day-old mouse kidney. Expressed in retina specifically at retinal Mueller glial cells. Expressed in brain. Expressed abundantly at the choroid plexus but also expressed weakly in the parenchyma. Expressed at the capillary endothelium in the cerebral white matter. Expressed in adult testis, in the elongated spermatids (ES) and in residual bodies inside Sertoli cells.

The protein localises to the endoplasmic reticulum membrane. It localises to the cytoplasmic vesicle membrane. It is found in the cell membrane. It carries out the reaction H2O(in) = H2O(out). The enzyme catalyses glycerol(in) = glycerol(out). The catalysed reaction is H2O2(out) = H2O2(in). Functionally, channel protein that facilitates the transport of water, glycerol and hydrogen peroxide across membrane of cell or organelles guaranteeing intracellular homeostasis in several organes like liver, kidney and brain. In situation of stress, participates in endoplasmic reticulum (ER) homeostasis by regulating redox homeostasis through the transport of hydrogen peroxide across the endoplasmic reticulum membrane thereby regulating the oxidative stress through the NADPH oxidase 2 pathway. Plays a role by maintaining an environment suitable for translation or protein foldings in the ER lumen namely by participating in the PKD1 glycosylation processing resulting in regulation of PKD1 membrane trafficking thereby preventing the accumulation of unfolding protein in ER. Plays a role in the proximal tubule function by regulating its endosomal acidification. May play a role in postnatal kidney development. This Mus musculus (Mouse) protein is Aquaporin-11.